A 516-amino-acid polypeptide reads, in one-letter code: Acetylcholine receptor subunit delta (516 aa).

An N-terminal signal peptide occupies residues 1–21 (MEGSVLTLVLLAALVVCGSWG). Topologically, residues 22–244 (LNEEERLIRH…VTFYLIIRRK (223 aa)) are extracellular. Residues Asn96 and Asn163 are each glycosylated (N-linked (GlcNAc...) asparagine). Cys150 and Cys164 are oxidised to a cystine. The next 3 helical transmembrane spans lie at 245-269 (PLFY…VFYL), 279-296 (MAIS…LISK), and 311-332 (FLLF…VLNI). At 333-470 (HFRTPSTHVL…WNRVARTVDR (138 aa)) the chain is on the cytoplasmic side. The residue at position 389 (Tyr389) is a Phosphotyrosine; by Tyr-kinases. The chain crosses the membrane as a helical span at residues 471–493 (LCLFVVTPIMVVGTAWIFLQGAY).

Belongs to the ligand-gated ion channel (TC 1.A.9) family. Acetylcholine receptor (TC 1.A.9.1) subfamily. Delta/CHRND sub-subfamily. In terms of assembly, pentamer of two alpha chains, and one each of the beta, delta, and gamma (in immature muscle) or epsilon (in mature muscle) chains. The muscle heteropentamer composed of alpha-1, beta-1, delta, epsilon subunits interacts with the alpha-conotoxin ImII.

It is found in the postsynaptic cell membrane. The protein localises to the cell membrane. The enzyme catalyses K(+)(in) = K(+)(out). It carries out the reaction Na(+)(in) = Na(+)(out). After binding acetylcholine, the AChR responds by an extensive change in conformation that affects all subunits and leads to opening of an ion-conducting channel across the plasma membrane. This chain is Acetylcholine receptor subunit delta (CHRND), found in Bos taurus (Bovine).